A 429-amino-acid chain; its full sequence is MVSSPIKSEAPVRHDVKDLSLAPLGQQRIEWASREMPVLRQIRDRFEKEKPFAGIRLAACCHVTTETANLAIALKAGGADAVLIASNPLSTQDDVAASLVVNYGIPVFAQKGEDTATYMRHVNIALDHRPNIIIDDGCDVVATLVKERQHQISDIIGTTEETTTGIVRLKAMFRDGVLTFPAINVNDADTKHFFDNRYGTGQSTLDGIIRATNILLAGKTVVVAGYGWCGKGTALRARGMGANVIVTEIDPVRAIEAVMDGFRVMPMLDAAPLGDIFITVTGNKHVIRAEHFAVMKDGAMVANSGHFDIEIDLATLKTLAKQVRVVRNFTEEYILPSGKSIIVLGEGRLINLAAAEGHPASVMDMSFANQALGCEYLVKNKGQLAAGIHPIPAAVDQEIARLKLQAMGIAIDTLTPEQVEYMNSWTSGT.

3 residues coordinate substrate: T64, D136, and E161. 162-164 lines the NAD(+) pocket; it reads TTT. Substrate is bound by residues K191 and D195. Residues N196, 225–230, E248, N283, 304–306, and N351 contribute to the NAD(+) site; these read GYGWCG and SGH.

The protein belongs to the adenosylhomocysteinase family. The cofactor is NAD(+).

The protein resides in the cytoplasm. The enzyme catalyses S-adenosyl-L-homocysteine + H2O = L-homocysteine + adenosine. Its pathway is amino-acid biosynthesis; L-homocysteine biosynthesis; L-homocysteine from S-adenosyl-L-homocysteine: step 1/1. May play a key role in the regulation of the intracellular concentration of adenosylhomocysteine. The sequence is that of Adenosylhomocysteinase from Thermosynechococcus vestitus (strain NIES-2133 / IAM M-273 / BP-1).